The sequence spans 333 residues: Transcription factor MYB94 (333 aa).

2 HTH myb-type domains span residues 9–65 and 66–116; these read KIGV…RPGI and KRGN…KKKL. DNA-binding regions (H-T-H motif) lie at residues 37-61 and 89-112; these read WRSV…TNYL and WAAI…NTHL. A compositionally biased stretch (polar residues) spans 134–154; sequence KDFSISNKNTTSHQSSNSSKG. Disordered stretches follow at residues 134–157 and 183–218; these read KDFS…GQWE and PTNF…YPSG. Residues 196-209 show a composition bias toward low complexity; the sequence is SSSSSSTTTTTTTT.

In terms of tissue distribution, expressed in germinating seeds, rosette and cauline leaves, flower buds, open flowers, stems and developing siliques.

It localises to the nucleus. Functionally, transcription activator involved in the activation of cuticular wax biosynthesis under drought stress. Binds directly to the promoters of genes involved in cuticular wax biosynthesis. Transactivates WSD1, KCS2/DAISY, CER1, CER2, FAR3 and ECR genes. Functions together with MYB96 in the activation of cuticular wax biosynthesis. This chain is Transcription factor MYB94, found in Arabidopsis thaliana (Mouse-ear cress).